Consider the following 802-residue polypeptide: Homeobox-leucine zipper protein ANTHOCYANINLESS 2 (802 aa).

The tract at residues 71 to 143 is disordered; that stretch reads QPERGTNRGE…RKKRYHRHTP (73 aa). Basic and acidic residues predominate over residues 103–113; the sequence is RSREEEHESRS. A compositionally biased stretch (basic residues) spans 133–142; the sequence is PRKKRYHRHT. A DNA-binding region (homeobox) is located at residues 134–193; that stretch reads RKKRYHRHTPQQIQELESMFKECPHPDEKQRLELSKRLCLETRQVKFWFQNRRTQMKTQL. The stretch at 182–221 forms a coiled coil; the sequence is FQNRRTQMKTQLERHENALLRQENDKLRAENMSIREAMRN. Residues 315–546 enclose the START domain; the sequence is GIDQKSVLLE…LQRQCECLAI (232 aa).

This sequence belongs to the HD-ZIP homeobox family. Class IV subfamily. In terms of assembly, interacts with AIL7/PLT7, ANT, BBM and AIL1. As to expression, expressed in roots, stems, leaves and floral buds.

It localises to the nucleus. In terms of biological role, probable transcription factor involved in the regulation of the tissue-specific accumulation of anthocyanins and in cellular organization of the primary root. The protein is Homeobox-leucine zipper protein ANTHOCYANINLESS 2 of Arabidopsis thaliana (Mouse-ear cress).